Reading from the N-terminus, the 335-residue chain is Tetraacyldisaccharide 4'-kinase (335 aa).

Residue 58–65 (TVGGSGKT) coordinates ATP.

This sequence belongs to the LpxK family.

It catalyses the reaction a lipid A disaccharide + ATP = a lipid IVA + ADP + H(+). The protein operates within glycolipid biosynthesis; lipid IV(A) biosynthesis; lipid IV(A) from (3R)-3-hydroxytetradecanoyl-[acyl-carrier-protein] and UDP-N-acetyl-alpha-D-glucosamine: step 6/6. Its function is as follows. Transfers the gamma-phosphate of ATP to the 4'-position of a tetraacyldisaccharide 1-phosphate intermediate (termed DS-1-P) to form tetraacyldisaccharide 1,4'-bis-phosphate (lipid IVA). The sequence is that of Tetraacyldisaccharide 4'-kinase from Shewanella sp. (strain ANA-3).